A 350-amino-acid polypeptide reads, in one-letter code: Adenine deaminase (350 aa).

Positions 24, 26, and 207 each coordinate Zn(2+). E210 acts as the Proton donor in catalysis. D288 is a binding site for Zn(2+). A substrate-binding site is contributed by D289.

It belongs to the metallo-dependent hydrolases superfamily. Adenosine and AMP deaminases family. Adenine deaminase type 2 subfamily. Zn(2+) is required as a cofactor.

It carries out the reaction adenine + H2O + H(+) = hypoxanthine + NH4(+). In terms of biological role, catalyzes the hydrolytic deamination of adenine to hypoxanthine. Plays an important role in the purine salvage pathway and in nitrogen catabolism. This Paraburkholderia phytofirmans (strain DSM 17436 / LMG 22146 / PsJN) (Burkholderia phytofirmans) protein is Adenine deaminase.